We begin with the raw amino-acid sequence, 638 residues long: Methyl-accepting chemotaxis protein McpQ (638 aa).

The chain crosses the membrane as a helical span at residues 18-38; sequence LGLGFGLVLLLTLAITLTGWH. Positions 45 to 282 constitute an HBM domain; the sequence is DRGDKLGNIS…SQTEVRDAAA (238 aa). A helical membrane pass occupies residues 287–307; sequence TLLTVATVLALALGLLAAWAI. One can recognise an HAMP domain in the interval 309–361; sequence RQIIIPLRQTLRAAERVASGDLTQSLQVQRRDELGQLQASMHRMTQGLRELIG. One can recognise a Methyl-accepting transducer domain in the interval 366–602; the sequence is GVTQIASAAE…EINRSVMNVR (237 aa).

It belongs to the methyl-accepting chemotaxis (MCP) protein family.

It localises to the cell membrane. In terms of biological role, chemotactic-signal transducers respond to changes in the concentration of attractants and repellents in the environment, transduce a signal from the outside to the inside of the cell, and facilitate sensory adaptation through the variation of the level of methylation. McpQ recognizes specifically citrate and citrate/metal(2+) complexes. Binds citrate/metal(2+) complexes with higher affinity than free citrate, and mediates preferentially chemotaxis toward citrate/metal(2+) complexes. The polypeptide is Methyl-accepting chemotaxis protein McpQ (Pseudomonas putida (strain ATCC 47054 / DSM 6125 / CFBP 8728 / NCIMB 11950 / KT2440)).